Consider the following 326-residue polypeptide: Alkanal monooxygenase beta chain (326 aa).

Belongs to the bacterial luciferase oxidoreductase family. Heterodimer of an alpha and a beta chain.

The catalysed reaction is a long-chain fatty aldehyde + FMNH2 + O2 = a long-chain fatty acid + hnu + FMN + H2O + 2 H(+). In terms of biological role, light-emitting reaction in luminous bacteria. The specific role of the beta subunit is unknown, but it is absolutely required for bioluminescence activity. This Photobacterium leiognathi protein is Alkanal monooxygenase beta chain (luxB).